Consider the following 319-residue polypeptide: Tetrahydromethanopterin S-methyltransferase subunit H (319 aa).

It belongs to the MtrH family. In terms of assembly, the complex is composed of 8 subunits; MtrA, MtrB, MtrC, MtrD, MtrE, MtrF, MtrG and MtrH.

It carries out the reaction 5-methyl-5,6,7,8-tetrahydromethanopterin + coenzyme M + 2 Na(+)(in) = 5,6,7,8-tetrahydromethanopterin + methyl-coenzyme M + 2 Na(+)(out). The protein operates within one-carbon metabolism; methanogenesis from CO(2); methyl-coenzyme M from 5,10-methylene-5,6,7,8-tetrahydromethanopterin: step 2/2. In terms of biological role, part of a complex that catalyzes the formation of methyl-coenzyme M and tetrahydromethanopterin from coenzyme M and methyl-tetrahydromethanopterin. This is an energy-conserving, sodium-ion translocating step. MtrH catalyzes the transfer of the methyl group from methyl-tetrahydromethanopterin to the corrinoid prosthetic group of MtrA. This chain is Tetrahydromethanopterin S-methyltransferase subunit H, found in Methanococcus vannielii (strain ATCC 35089 / DSM 1224 / JCM 13029 / OCM 148 / SB).